Consider the following 513-residue polypeptide: GMP synthase [glutamine-hydrolyzing] (513 aa).

The Glutamine amidotransferase type-1 domain maps to 3 to 200 (SVLVLDFGSQ…LINIAGIRPD (198 aa)). The Nucleophile role is filled by cysteine 80. Catalysis depends on residues histidine 174 and glutamate 176. The GMPS ATP-PPase domain maps to 201–388 (WSSKSFIEHQ…LGIPEDILMR (188 aa)). Position 228 to 234 (228 to 234 (SGGVDST)) interacts with ATP.

In terms of assembly, homodimer.

The catalysed reaction is XMP + L-glutamine + ATP + H2O = GMP + L-glutamate + AMP + diphosphate + 2 H(+). It functions in the pathway purine metabolism; GMP biosynthesis; GMP from XMP (L-Gln route): step 1/1. Its function is as follows. Catalyzes the synthesis of GMP from XMP. This Chlorobium luteolum (strain DSM 273 / BCRC 81028 / 2530) (Pelodictyon luteolum) protein is GMP synthase [glutamine-hydrolyzing].